Reading from the N-terminus, the 502-residue chain is Probable cytochrome P450 514A4 (502 aa).

The chain crosses the membrane as a helical span at residues Ile4 to Leu24. Cys448 is a binding site for heme.

This sequence belongs to the cytochrome P450 family. Heme serves as cofactor.

Its subcellular location is the membrane. The polypeptide is Probable cytochrome P450 514A4 (cyp514A4) (Dictyostelium discoideum (Social amoeba)).